We begin with the raw amino-acid sequence, 801 residues long: tRNA(Met) cytidine acetyltransferase TmcA (801 aa).

ATP contacts are provided by residues glutamine 228, 256-265 (GRGKSSAVGL), and arginine 412. The 181-residue stretch at 457-637 (EELFLKNEEE…YTVIVVKPLS (181 aa)) folds into the N-acetyltransferase domain. Acetyl-CoA is bound by residues 562 to 564 (IAT), 569 to 575 (MGKGLGS), and glutamate 602.

The protein belongs to the RNA cytidine acetyltransferase family. TmcA subfamily.

It localises to the cytoplasm. It catalyses the reaction cytidine(34) in elongator tRNA(Met) + acetyl-CoA + ATP + H2O = N(4)-acetylcytidine(34) in elongator tRNA(Met) + ADP + phosphate + CoA + H(+). Functionally, catalyzes the formation of N(4)-acetylcytidine (ac(4)C) at the wobble position of tRNA(Met), by using acetyl-CoA as an acetyl donor and ATP (or GTP). In Thermofilum pendens (strain DSM 2475 / Hrk 5), this protein is tRNA(Met) cytidine acetyltransferase TmcA.